The chain runs to 637 residues: Threonine--tRNA ligase (637 aa).

The TGS domain occupies 1-61 (MPVITLPDGS…DKDAELAIVT (61 aa)). A catalytic region spans residues 242 to 533 (DHRKIGKKLG…LIEHYEGAFP (292 aa)). Zn(2+) is bound by residues C333, H384, and H510.

Belongs to the class-II aminoacyl-tRNA synthetase family. In terms of assembly, homodimer. It depends on Zn(2+) as a cofactor.

The protein resides in the cytoplasm. It catalyses the reaction tRNA(Thr) + L-threonine + ATP = L-threonyl-tRNA(Thr) + AMP + diphosphate + H(+). Catalyzes the attachment of threonine to tRNA(Thr) in a two-step reaction: L-threonine is first activated by ATP to form Thr-AMP and then transferred to the acceptor end of tRNA(Thr). Also edits incorrectly charged L-seryl-tRNA(Thr). The polypeptide is Threonine--tRNA ligase (Hahella chejuensis (strain KCTC 2396)).